Consider the following 87-residue polypeptide: Exodeoxyribonuclease 7 small subunit (87 aa).

It belongs to the XseB family. Heterooligomer composed of large and small subunits.

It localises to the cytoplasm. The catalysed reaction is Exonucleolytic cleavage in either 5'- to 3'- or 3'- to 5'-direction to yield nucleoside 5'-phosphates.. Functionally, bidirectionally degrades single-stranded DNA into large acid-insoluble oligonucleotides, which are then degraded further into small acid-soluble oligonucleotides. In Solidesulfovibrio magneticus (strain ATCC 700980 / DSM 13731 / RS-1) (Desulfovibrio magneticus), this protein is Exodeoxyribonuclease 7 small subunit.